Here is a 216-residue protein sequence, read N- to C-terminus: Thymidylate kinase (216 aa).

10–17 (GVDGSGKT) contacts ATP.

This sequence belongs to the thymidylate kinase family.

The enzyme catalyses dTMP + ATP = dTDP + ADP. In terms of biological role, phosphorylation of dTMP to form dTDP in both de novo and salvage pathways of dTTP synthesis. The sequence is that of Thymidylate kinase from Pelotomaculum thermopropionicum (strain DSM 13744 / JCM 10971 / SI).